We begin with the raw amino-acid sequence, 356 residues long: Holliday junction branch migration complex subunit RuvB (356 aa).

Residues 4–190 (TDKLAAERII…FGIVARLEFY (187 aa)) form a large ATPase domain (RuvB-L) region. ATP is bound by residues Leu29, Arg30, Gly71, Lys74, Thr75, Thr76, 137-139 (EDY), Arg180, Tyr190, and Arg227. Thr75 lines the Mg(2+) pocket. The segment at 191–261 (DAEQLSRIVR…VADAALAMLD (71 aa)) is small ATPAse domain (RuvB-S). Positions 264–356 (PVGFDLMDRK…NLWDTPDAEC (93 aa)) are head domain (RuvB-H). Residues Arg300, Arg319, and Arg324 each coordinate DNA.

The protein belongs to the RuvB family. Homohexamer. Forms an RuvA(8)-RuvB(12)-Holliday junction (HJ) complex. HJ DNA is sandwiched between 2 RuvA tetramers; dsDNA enters through RuvA and exits via RuvB. An RuvB hexamer assembles on each DNA strand where it exits the tetramer. Each RuvB hexamer is contacted by two RuvA subunits (via domain III) on 2 adjacent RuvB subunits; this complex drives branch migration. In the full resolvosome a probable DNA-RuvA(4)-RuvB(12)-RuvC(2) complex forms which resolves the HJ.

The protein localises to the cytoplasm. The catalysed reaction is ATP + H2O = ADP + phosphate + H(+). Functionally, the RuvA-RuvB-RuvC complex processes Holliday junction (HJ) DNA during genetic recombination and DNA repair, while the RuvA-RuvB complex plays an important role in the rescue of blocked DNA replication forks via replication fork reversal (RFR). RuvA specifically binds to HJ cruciform DNA, conferring on it an open structure. The RuvB hexamer acts as an ATP-dependent pump, pulling dsDNA into and through the RuvAB complex. RuvB forms 2 homohexamers on either side of HJ DNA bound by 1 or 2 RuvA tetramers; 4 subunits per hexamer contact DNA at a time. Coordinated motions by a converter formed by DNA-disengaged RuvB subunits stimulates ATP hydrolysis and nucleotide exchange. Immobilization of the converter enables RuvB to convert the ATP-contained energy into a lever motion, pulling 2 nucleotides of DNA out of the RuvA tetramer per ATP hydrolyzed, thus driving DNA branch migration. The RuvB motors rotate together with the DNA substrate, which together with the progressing nucleotide cycle form the mechanistic basis for DNA recombination by continuous HJ branch migration. Branch migration allows RuvC to scan DNA until it finds its consensus sequence, where it cleaves and resolves cruciform DNA. This is Holliday junction branch migration complex subunit RuvB from Burkholderia pseudomallei (strain 668).